An 806-amino-acid polypeptide reads, in one-letter code: Acetyl-CoA decarbonylase/synthase complex subunit alpha 1 (806 aa).

Residues C73, C76, C77, C79, C84, and C94 each coordinate [4Fe-4S] cluster. Residue H117 participates in CO binding. Residues H250, C278, and C323 each contribute to the [Ni-4Fe-4S] cluster site. 4Fe-4S ferredoxin-type domains lie at 407–436 (DEEF…IPEA) and 446–475 (SYLE…LNII). Residues C417, C420, C423, C427, C455, C458, C461, and C465 each coordinate [4Fe-4S] cluster. [Ni-4Fe-4S] cluster is bound by residues C523, C552, and C587.

This sequence belongs to the Ni-containing carbon monoxide dehydrogenase family. Heterotetramer of two alpha and two epsilon subunits. The ACDS complex is made up of alpha, epsilon, beta, gamma and delta subunits with a probable stoichiometry of (alpha(2)epsilon(2))(4)-beta(8)-(gamma(1)delta(1))(8). The cofactor is [4Fe-4S] cluster. It depends on [Ni-4Fe-4S] cluster as a cofactor.

The catalysed reaction is CO + 2 oxidized [2Fe-2S]-[ferredoxin] + H2O = 2 reduced [2Fe-2S]-[ferredoxin] + CO2 + 2 H(+). The protein operates within one-carbon metabolism; methanogenesis from acetate. Functionally, part of the ACDS complex that catalyzes the reversible cleavage of acetyl-CoA, allowing growth on acetate as sole source of carbon and energy. The alpha-epsilon subcomponent functions as a carbon monoxide dehydrogenase. In Methanosarcina acetivorans (strain ATCC 35395 / DSM 2834 / JCM 12185 / C2A), this protein is Acetyl-CoA decarbonylase/synthase complex subunit alpha 1.